Reading from the N-terminus, the 116-residue chain is Large ribosomal subunit protein bL17 (116 aa).

It belongs to the bacterial ribosomal protein bL17 family. As to quaternary structure, part of the 50S ribosomal subunit. Contacts protein L32.

This is Large ribosomal subunit protein bL17 from Chloroflexus aurantiacus (strain ATCC 29366 / DSM 635 / J-10-fl).